The following is a 994-amino-acid chain: Sarcoplasmic/endoplasmic reticulum calcium ATPase 1 (994 aa).

Residues 1-48 (MEQAHTKTTEECLAYFGVNENTGLSLDQVKKNFDKFGPNELPAEEGKS) are Cytoplasmic-facing. A helical membrane pass occupies residues 49–69 (LWELVAEQFEDLLVRILLLAA). The Lumenal segment spans residues 70 to 89 (IISFVLAWFEEGEETVTAFV). Residues 90–110 (EPFVILLILIANAVVGVWQER) traverse the membrane as a helical segment. Residues 111 to 253 (NAEDAIEALK…QEKTPLQQKL (143 aa)) lie on the Cytoplasmic side of the membrane. The chain crosses the membrane as a helical span at residues 254-273 (DEFGEQLSKVISLICVAVWL). The Lumenal segment spans residues 274–295 (INIGHFNDPIHGGSWIKGAIYY). Residues 296–313 (FKIAVALAVAAIPEGLPA) form a helical membrane-spanning segment. Ca(2+) is bound by residues valine 304, alanine 305, isoleucine 307, and glutamate 309. The Cytoplasmic portion of the chain corresponds to 314–757 (VITTCLALGT…EEGRAIYNNM (444 aa)). Aspartate 351 acts as the 4-aspartylphosphate intermediate in catalysis. Mg(2+)-binding residues include aspartate 351 and threonine 353. Residues threonine 353, glutamate 442, arginine 489, lysine 515, arginine 560, threonine 625, glycine 626, aspartate 627, arginine 678, and lysine 684 each coordinate ATP. A Mg(2+)-binding site is contributed by aspartate 703. Asparagine 706 lines the ATP pocket. Residues 758-777 (KQFIRYLISSNVGEVVCIFL) traverse the membrane as a helical segment. Residues asparagine 768 and glutamate 771 each coordinate Ca(2+). At 778–787 (TAALGLPEAL) the chain is on the lumenal side. Residues 788-808 (IPVQLLWVNLVTDGLPATALG) form a helical membrane-spanning segment. The tract at residues 788-808 (IPVQLLWVNLVTDGLPATALG) is interaction with PLN. Ca(2+) contacts are provided by asparagine 796, threonine 799, and aspartate 800. The Cytoplasmic portion of the chain corresponds to 809 to 828 (FNPPDLDIMDRPPRSPKEPL). The chain crosses the membrane as a helical span at residues 829 to 851 (ISGWLFFRYMAIGGYVGAATVGA). At 852-897 (AAWWFMYADDGPNVTFYQLSHFMQCTEDNPDFEGHECEIFESPVPM) the chain is on the lumenal side. Cysteine 876 and cysteine 888 are oxidised to a cystine. A helical transmembrane segment spans residues 898–917 (TMALSVLVTIEMCNALNSLS). Position 908 (glutamate 908) interacts with Ca(2+). The Cytoplasmic segment spans residues 918–930 (ENQSLIRMPPWSN). Residues 931-949 (FWLLGSICLSMSLHFLILY) traverse the membrane as a helical segment. Residues 932-943 (WLLGSICLSMSL) are interaction with PLN. Residues 950-964 (VEPLPMIFKLTPLNV) are Lumenal-facing. Residues 965–985 (EQWFIVLKMSFPVILLDELLK) traverse the membrane as a helical segment. The Cytoplasmic portion of the chain corresponds to 986–994 (FVARNYLEG).

Belongs to the cation transport ATPase (P-type) (TC 3.A.3) family. Type IIA subfamily. In terms of assembly, interacts with sarcolipin (SLN). Interacts with phospholamban (PLN). Interacts with myoregulin (MRLN). Interacts with DWORF. Interacts with VMP1. Requires Mg(2+) as cofactor.

It is found in the endoplasmic reticulum membrane. Its subcellular location is the sarcoplasmic reticulum membrane. It catalyses the reaction Ca(2+)(in) + ATP + H2O = Ca(2+)(out) + ADP + phosphate + H(+). Its activity is regulated as follows. Inhibited by sarcolipin (SLN) and myoregulin (MRLN). Also shown to be inhibited by phospholamban (PLN) in vitro. Enhanced by DWORF; DWORF increases activity by displacing sarcolipin (SLN), phospholamban (PLN) and myoregulin (MRLN). Its function is as follows. Key regulator of striated muscle performance by acting as the major Ca(2+) ATPase responsible for the reuptake of cytosolic Ca(2+) into the sarcoplasmic reticulum. Catalyzes the hydrolysis of ATP coupled with the translocation of calcium from the cytosol to the sarcoplasmic reticulum lumen. Contributes to calcium sequestration involved in muscular excitation/contraction. The chain is Sarcoplasmic/endoplasmic reticulum calcium ATPase 1 (ATP2A1) from Pelophylax lessonae (Pool frog).